The primary structure comprises 331 residues: Phosphoribosylformylglycinamidine cyclo-ligase (331 aa).

The protein belongs to the AIR synthase family.

Its subcellular location is the cytoplasm. The enzyme catalyses 2-formamido-N(1)-(5-O-phospho-beta-D-ribosyl)acetamidine + ATP = 5-amino-1-(5-phospho-beta-D-ribosyl)imidazole + ADP + phosphate + H(+). Its pathway is purine metabolism; IMP biosynthesis via de novo pathway; 5-amino-1-(5-phospho-D-ribosyl)imidazole from N(2)-formyl-N(1)-(5-phospho-D-ribosyl)glycinamide: step 2/2. This is Phosphoribosylformylglycinamidine cyclo-ligase from Clostridium botulinum (strain ATCC 19397 / Type A).